The following is a 370-amino-acid chain: Proline-rich protein 5-like (370 aa).

A Phosphoserine modification is found at serine 28. 2 disordered regions span residues 312–346 and 351–370; these read LGEEAGGEDKHLLLPPSFPPPHRQCSSEPSILDSP and LEDVASGSQEDSELNCASLS.

This sequence belongs to the PROTOR family. Interacts with the mammalian target of rapamycin complex 2 (mTORC2) which contains MTOR, MLST8, PRR5, RICTOR, MAPKAP1 and DEPTOR. Interacts with RFFL. Interacts (via C-terminus) with ZFP36 (via C-terminus); this interaction may accelerate ZFP36-mediated mRNA decay during stress. Interacts with RICTOR. In terms of processing, ubiquitinated. Ubiquitination by RFFL promotes proteasomal degradation of PRR5L thereby modifying the substrate-specific activity of the mTORC2 complex. Ubiquitination by RFFL is stimulated by LPA/lysophosphatidic acid.

Its function is as follows. Associates with the mTORC2 complex that regulates cellular processes including survival and organization of the cytoskeleton. Regulates the activity of the mTORC2 complex in a substrate-specific manner preventing for instance the specific phosphorylation of PKCs and thereby controlling cell migration. Plays a role in the stimulation of ZFP36-mediated mRNA decay of several ZFP36-associated mRNAs, such as TNF-alpha and GM-CSF, in response to stress. Required for ZFP36 localization to cytoplasmic stress granule (SG) and P-body (PB) in response to stress. This chain is Proline-rich protein 5-like (Prr5l), found in Mus musculus (Mouse).